The following is a 700-amino-acid chain: Elongation factor G 2 (700 aa).

The region spanning 8–290 (ERYRNIGISA…AVIDFLPSPV (283 aa)) is the tr-type G domain. GTP-binding positions include 17–24 (AHIDAGKT), 88–92 (DTPGH), and 142–145 (NKMD).

It belongs to the TRAFAC class translation factor GTPase superfamily. Classic translation factor GTPase family. EF-G/EF-2 subfamily.

The protein localises to the cytoplasm. Functionally, catalyzes the GTP-dependent ribosomal translocation step during translation elongation. During this step, the ribosome changes from the pre-translocational (PRE) to the post-translocational (POST) state as the newly formed A-site-bound peptidyl-tRNA and P-site-bound deacylated tRNA move to the P and E sites, respectively. Catalyzes the coordinated movement of the two tRNA molecules, the mRNA and conformational changes in the ribosome. The polypeptide is Elongation factor G 2 (Burkholderia orbicola (strain AU 1054)).